A 408-amino-acid polypeptide reads, in one-letter code: RNA-splicing ligase RtcB (408 aa).

Residues D75, C78, H168, H185, and H281 each contribute to the Mn(2+) site. 167-171 (NHFIE) lines the GMP pocket. Residues 281 to 282 (HN), 313 to 316 (PGSM), S320, 337 to 340 (HGAG), and K407 contribute to the GMP site. H337 acts as the GMP-histidine intermediate in catalysis.

It belongs to the RtcB family. In terms of assembly, monomer. Requires Mn(2+) as cofactor.

The enzyme catalyses a 3'-end 3'-phospho-ribonucleotide-RNA + a 5'-end dephospho-ribonucleoside-RNA + GTP = a ribonucleotidyl-ribonucleotide-RNA + GMP + diphosphate. The catalysed reaction is a 3'-end 2',3'-cyclophospho-ribonucleotide-RNA + a 5'-end dephospho-ribonucleoside-RNA + GTP + H2O = a ribonucleotidyl-ribonucleotide-RNA + GMP + diphosphate + H(+). GTP-dependent RNA ligase that is involved in RNA repair. Joins RNA with 2',3'-cyclic-phosphate or 3'-phosphate ends to RNA with 5'-hydroxy ends. Also acts as a DNA ligase in case of DNA damage by splicing 'dirty' DNA breaks, characterized by 3'-phosphate (or cyclic-phosphate) and 5'-hydroxy ends that cannot be sealed by classical DNA ligases. Repairs tRNA cleaved by colicins D or E5, does not repair damaged 16S rRNA. Functionally, able to catalyze tRNA splicing in vivo in yeast, but bacteria are not known to splice tRNA. The protein is RNA-splicing ligase RtcB of Escherichia coli (strain K12).